The following is a 179-amino-acid chain: Large ribosomal subunit protein uL5 (179 aa).

This sequence belongs to the universal ribosomal protein uL5 family. Part of the 50S ribosomal subunit; part of the 5S rRNA/L5/L18/L25 subcomplex. Contacts the 5S rRNA and the P site tRNA. Forms a bridge to the 30S subunit in the 70S ribosome.

Its function is as follows. This is one of the proteins that bind and probably mediate the attachment of the 5S RNA into the large ribosomal subunit, where it forms part of the central protuberance. In the 70S ribosome it contacts protein S13 of the 30S subunit (bridge B1b), connecting the 2 subunits; this bridge is implicated in subunit movement. Contacts the P site tRNA; the 5S rRNA and some of its associated proteins might help stabilize positioning of ribosome-bound tRNAs. The sequence is that of Large ribosomal subunit protein uL5 from Prochlorococcus marinus (strain MIT 9303).